Here is a 619-residue protein sequence, read N- to C-terminus: Mitochondrial Rho GTPase 1 (619 aa).

Topologically, residues 1–593 (MKKDVRILLV…TQADLKSSTF (593 aa)) are cytoplasmic. One can recognise a Miro 1 domain in the interval 2-168 (KKDVRILLVG…FYYAQKAVLH (167 aa)). Residues R14, G16, K17, T18, and S19 each coordinate GTP. T18 provides a ligand contact to Mg(2+). 2 residues coordinate Mg(2+): P35 and D57. GTP contacts are provided by S59, N118, K119, D121, A149, and K150. EF-hand domains are found at residues 184-219 (ACIK…CFNT) and 304-339 (HAYL…FPYM). The Ca(2+) site is built by D197, D199, D201, T203, E208, D317, D319, D321, A323, and E328. One can recognise a Miro 2 domain in the interval 417–580 (RNVFRCNVVG…FVKLTTMAMY (164 aa)). 11 residues coordinate GTP: G429, C430, G431, K432, S433, G434, R448, K529, D531, T559, and C560. G429 provides a ligand contact to Mg(2+). The helical; Anchor for type IV membrane protein transmembrane segment at 594–616 (WLRASFGATVFAFLGFAMYKALI) threads the bilayer. Residues 617–619 (KQR) are Mitochondrial intermembrane-facing.

This sequence belongs to the mitochondrial Rho GTPase family. Homodimer.

The protein localises to the mitochondrion outer membrane. The enzyme catalyses GTP + H2O = GDP + phosphate + H(+). The catalysed reaction is ATP + H2O = ADP + phosphate + H(+). It carries out the reaction UTP + H2O = UDP + phosphate + H(+). Atypical mitochondrial nucleoside-triphosphatase (NTPase) involved in mitochondrial trafficking. Probably involved in control of anterograde transport of mitochondria and their subcellular distribution. Can hydrolyze GTP, ATP and UTP. This is Mitochondrial Rho GTPase 1 (RHOT1) from Gallus gallus (Chicken).